A 238-amino-acid chain; its full sequence is Small ribosomal subunit protein uS3 (238 aa).

The KH type-2 domain maps to 39 to 109; sequence IRTFINQQLA…TIKVNVVEVN (71 aa). The segment at 215-238 is disordered; sequence EAVPREATRRSPQRRLPQFENRSN.

It belongs to the universal ribosomal protein uS3 family. As to quaternary structure, part of the 30S ribosomal subunit. Forms a tight complex with proteins S10 and S14.

Functionally, binds the lower part of the 30S subunit head. Binds mRNA in the 70S ribosome, positioning it for translation. In Thermosynechococcus vestitus (strain NIES-2133 / IAM M-273 / BP-1), this protein is Small ribosomal subunit protein uS3.